Reading from the N-terminus, the 312-residue chain is Acetaldehyde dehydrogenase (312 aa).

11–14 (SGNI) contacts NAD(+). Cysteine 129 serves as the catalytic Acyl-thioester intermediate. NAD(+)-binding positions include 160-168 (SAGPGTRAN) and asparagine 287.

This sequence belongs to the acetaldehyde dehydrogenase family.

The enzyme catalyses acetaldehyde + NAD(+) + CoA = acetyl-CoA + NADH + H(+). This is Acetaldehyde dehydrogenase (xylQ) from Sphingobium yanoikuyae (Sphingomonas yanoikuyae).